We begin with the raw amino-acid sequence, 1272 residues long: Ubiquitin carboxyl-terminal hydrolase 2 (1272 aa).

Positions 736-1258 (TGINNIGNTC…TPYFLVYVKQ (523 aa)) constitute a USP domain. The active-site Nucleophile is Cys745. Positions 884-918 (DGLNGDVGTDANRKKNESNDAEVSENEDTTGLTSP) are disordered. Residues 902–911 (NDAEVSENED) are compositionally biased toward acidic residues. At Ser907 the chain carries Phosphoserine. Residue His1209 is the Proton acceptor of the active site.

This sequence belongs to the peptidase C19 family. In terms of assembly, forms a ternary complex with RSP5 and RUP1. Interacts with RSP5. Interacts with FZO1.

It catalyses the reaction Thiol-dependent hydrolysis of ester, thioester, amide, peptide and isopeptide bonds formed by the C-terminal Gly of ubiquitin (a 76-residue protein attached to proteins as an intracellular targeting signal).. Has an ATP-independent isopeptidase activity, cleaving at the C-terminus of the ubiquitin moiety in natural or engineered linear fusion proteins, irrespective of their size or the presence of an N-terminal extension to ubiquitin. Hydrolyzes polyubiquitinated 'Lys-63' polyubiquitin chains in RPO21, producing mono-ubiquitinated RNA polymerase II. Removes ubiquitin chains that initiate proteolysis of FZO1 and inhibit mitochondrial fusion. The protein is Ubiquitin carboxyl-terminal hydrolase 2 (UBP2) of Saccharomyces cerevisiae (strain ATCC 204508 / S288c) (Baker's yeast).